The following is a 437-amino-acid chain: Transcription factor AP-2-alpha (437 aa).

Lys-10 is covalently cross-linked (Glycyl lysine isopeptide (Lys-Gly) (interchain with G-Cter in SUMO); alternate). Residue Lys-10 forms a Glycyl lysine isopeptide (Lys-Gly) (interchain with G-Cter in SUMO2); alternate linkage. The interval Cys-14 to Leu-107 is disordered. The short motif at Tyr-57–Tyr-62 is the PPxY motif element. Composition is skewed to low complexity over residues Ile-65–Ser-74 and Gln-88–Gln-101. Residues Lys-177 and Lys-184 each participate in a glycyl lysine isopeptide (Lys-Gly) (interchain with G-Cter in SUMO2) cross-link. Ser-239 carries the phosphoserine; by PKA modification. Residues Arg-280–Asp-410 form an H-S-H (helix-span-helix), dimerization region. Residues Leu-414–Lys-427 are compositionally biased toward polar residues. Residues Leu-414 to Lys-437 form a disordered region. Residues Ser-428 to Lys-437 show a composition bias toward basic and acidic residues.

It belongs to the AP-2 family. Binds DNA as a dimer. Can form homodimers or heterodimers with other AP-2 family members. Interacts with WWOX. Interacts with CITED4. Interacts with UBE2I. Interacts with RALBP1 in a complex also containing EPN1 and NUMB during interphase and mitosis. Interacts with KCTD1; this interaction represses transcription activation. Interacts (via C-terminus) with CITED2 (via C-terminus); the interaction stimulates TFAP2A-transcriptional activation. Interacts (via N-terminus) with EP300 (via N-terminus); the interaction requires CITED2. Interacts with KCTD15; this interaction inhibits TFAP2A transcriptional activation. In terms of processing, sumoylated on Lys-10; which inhibits transcriptional activity.

The protein localises to the nucleus. Functionally, sequence-specific DNA-binding protein that interacts with inducible viral and cellular enhancer elements to regulate transcription of selected genes. AP-2 factors bind to the consensus sequence 5'-GCCNNNGGC-3' and activate genes involved in a large spectrum of important biological functions including proper eye, face, body wall, limb and neural tube development. They also suppress a number of genes including MCAM/MUC18, C/EBP alpha and MYC. AP-2-alpha is the only AP-2 protein required for early morphogenesis of the lens vesicle. Together with the CITED2 coactivator, stimulates the PITX2 P1 promoter transcription activation. Associates with chromatin to the PITX2 P1 promoter region. The sequence is that of Transcription factor AP-2-alpha (TFAP2A) from Homo sapiens (Human).